Here is a 446-residue protein sequence, read N- to C-terminus: Signal recognition particle protein (446 aa).

GTP is bound by residues Gly108–Thr115, Asp191–Arg195, and Thr249–Asp252.

It belongs to the GTP-binding SRP family. SRP54 subfamily. As to quaternary structure, part of the signal recognition particle protein translocation system, which is composed of SRP and FtsY. Interacts with a small cytoplasmic RNA (sc-RNA).

The protein localises to the cytoplasm. The catalysed reaction is GTP + H2O = GDP + phosphate + H(+). Functionally, involved in targeting and insertion of nascent membrane proteins into the cytoplasmic membrane. Binds to the hydrophobic signal sequence of the ribosome-nascent chain (RNC) as it emerges from the ribosomes. The SRP-RNC complex is then targeted to the cytoplasmic membrane where it interacts with the SRP receptor FtsY. Interaction with FtsY leads to the transfer of the RNC complex to the Sec translocase for insertion into the membrane, the hydrolysis of GTP by both Ffh and FtsY, and the dissociation of the SRP-FtsY complex into the individual components. The chain is Signal recognition particle protein from Bacillus subtilis (strain 168).